The chain runs to 229 residues: 2,3-bisphosphoglycerate-dependent phosphoglycerate mutase (229 aa).

Substrate-binding positions include 7–14, 20–21, R59, 86–89, K97, 113–114, and 182–183; these read RHGQSEWN, TG, ERHY, RR, and GN. H8 serves as the catalytic Tele-phosphohistidine intermediate. Residue E86 is the Proton donor/acceptor of the active site.

Belongs to the phosphoglycerate mutase family. BPG-dependent PGAM subfamily.

It catalyses the reaction (2R)-2-phosphoglycerate = (2R)-3-phosphoglycerate. Its pathway is carbohydrate degradation; glycolysis; pyruvate from D-glyceraldehyde 3-phosphate: step 3/5. Its function is as follows. Catalyzes the interconversion of 2-phosphoglycerate and 3-phosphoglycerate. The polypeptide is 2,3-bisphosphoglycerate-dependent phosphoglycerate mutase (Listeria innocua serovar 6a (strain ATCC BAA-680 / CLIP 11262)).